The following is a 283-amino-acid chain: NADPH-dependent 7-cyano-7-deazaguanine reductase (283 aa).

90–92 contacts substrate; it reads IES. 92 to 93 lines the NADPH pocket; the sequence is SK. The active-site Thioimide intermediate is C191. D198 (proton donor) is an active-site residue. 230–231 is a substrate binding site; that stretch reads HE. 259-260 contributes to the NADPH binding site; sequence RG.

The protein belongs to the GTP cyclohydrolase I family. QueF type 2 subfamily. In terms of assembly, homodimer.

It localises to the cytoplasm. It carries out the reaction 7-aminomethyl-7-carbaguanine + 2 NADP(+) = 7-cyano-7-deazaguanine + 2 NADPH + 3 H(+). It functions in the pathway tRNA modification; tRNA-queuosine biosynthesis. Its function is as follows. Catalyzes the NADPH-dependent reduction of 7-cyano-7-deazaguanine (preQ0) to 7-aminomethyl-7-deazaguanine (preQ1). This Tolumonas auensis (strain DSM 9187 / NBRC 110442 / TA 4) protein is NADPH-dependent 7-cyano-7-deazaguanine reductase.